The sequence spans 25 residues: Metallothionein (25 aa).

The Cu(+) site is built by cysteine 3, cysteine 5, cysteine 11, cysteine 13, cysteine 18, cysteine 20, and cysteine 23.

It belongs to the metallothionein superfamily. Type 8 family.

Its function is as follows. The metallothioneins are involved in the cellular sequestration of toxic metal ions. Binds six copper (cuprous) ions. The protein is Metallothionein of Agaricus bisporus (White button mushroom).